Consider the following 231-residue polypeptide: Putative N-acetylmannosamine-6-phosphate 2-epimerase (231 aa).

The protein belongs to the NanE family.

The catalysed reaction is an N-acyl-D-glucosamine 6-phosphate = an N-acyl-D-mannosamine 6-phosphate. Its pathway is amino-sugar metabolism; N-acetylneuraminate degradation; D-fructose 6-phosphate from N-acetylneuraminate: step 3/5. Functionally, converts N-acetylmannosamine-6-phosphate (ManNAc-6-P) to N-acetylglucosamine-6-phosphate (GlcNAc-6-P). The chain is Putative N-acetylmannosamine-6-phosphate 2-epimerase from Latilactobacillus sakei subsp. sakei (strain 23K) (Lactobacillus sakei subsp. sakei).